A 465-amino-acid chain; its full sequence is Tapasin (465 aa).

A signal peptide spans 1–23; it reads MKPLLLLVAVALGLATVVSVVSA. Residues 24-416 lie on the Lumenal side of the membrane; it reads GPEAIECWFV…GFSGPSIEDG (393 aa). Cys30 and Cys94 are oxidised to a cystine. N-linked (GlcNAc...) asparagine glycosylation occurs at Asn256. One can recognise an Ig-like C1-type domain in the interval 295-402; it reads PRVSLTPAPV…PASGRSADVT (108 aa). Cysteines 318 and 385 form a disulfide. The chain crosses the membrane as a helical span at residues 417–437; that stretch reads IGLFLSAFLLLGLLKVLGWLA. Over 438-465 the chain is Cytoplasmic; that stretch reads AYWTIPEVSKEKATAASLTIPRNSKKSQ.

Heterodimer with PDIA3; disulfide-linked. Obligatory mediator for the interaction between newly assembled MHC class I molecules, calreticulin, PDIA3 and TAP. Up to 4 MHC class I/tapasin complexes bind to 1 TAP. Interacts with HLA-G-B2M complex; this interaction is required for loading of high affinity peptides. On its own or as part of MHC class I peptide loading complex, interacts with ligand-free MR1 or MR1-B2M complex, providing for stable MR1 pools ready for metabolite antigen processing.

The protein resides in the endoplasmic reticulum membrane. Its function is as follows. Involved in the association of MHC class I with transporter associated with antigen processing (TAP) and in the assembly of MHC class I with peptide (peptide loading). This is Tapasin (Tapbp) from Mus musculus (Mouse).